We begin with the raw amino-acid sequence, 841 residues long: Probable outer membrane protein pmp2 (841 aa).

Positions 1–24 (MKIPLRFLLISLVPTLSMSNLLGA) are cleaved as a signal peptide. Residues 537 to 841 (GAPYEKRFWV…NVDAGSKIKF (305 aa)) enclose the Autotransporter domain.

Belongs to the PMP outer membrane protein family.

Its subcellular location is the secreted. The protein localises to the cell wall. The protein resides in the cell outer membrane. The polypeptide is Probable outer membrane protein pmp2 (pmp2) (Chlamydia pneumoniae (Chlamydophila pneumoniae)).